We begin with the raw amino-acid sequence, 275 residues long: MTDDKDVLRDVWFGRIPTCFTLYQDEITEREAEPYYLLLPRVSYLTLVTDKVKKHFQKVMRQEDISEIWFEYEGTPLKWHYPIGLLFDLLASISALPWNITVHFKSFPEKDLLHCPSKDVIEAHFMSCVKEADALKHKSRVISDMQRKDHKQLWMGLQNDRFDQFWTINRKLIEYPPEENGFRYIPFRIYQTTTERPFIQKLFRPVAADGQLHTLGDLLREVCPSAVAPEDGEKKSQVMIHGIEPLLETPLQWLSEHLSYPDNFLHISIVPQPTD.

The residue at position 1 (M1) is an N-acetylmethionine. A Glycyl lysine isopeptide (Lys-Gly) (interchain with G-Cter in ATG12) cross-link involves residue K130.

Belongs to the ATG5 family. As to quaternary structure, forms a conjugate with ATG12. Part of the minor complex composed of 4 sets of ATG12-ATG5 and ATG16L1 (400 kDa); this complex interacts with ATG3 leading to disruption of ATG7 interaction and promotion of ATG8-like proteins lipidation. Forms an 800-kDa complex composed of ATG12-ATG5 and ATG16L2. The ATG12-ATG5 conjugate interacts with RAB33A; this interaction is bridged by ATG16L1 and promotes ATG12-ATG5-ATG16L1 complex recruitment to phagophores. Interacts with TECPR1; the interaction is direct and does not take place when ATG16L1 is associated with the ATG5-ATG12 conjugate. Interacts with DHX58/RIG-1, IFIH1/MDA5 and MAVS/IPS-1 in monomeric form as well as in ATG12-ATG5 conjugate form. The interaction with MAVS is further enhanced upon vesicular stomatitis virus (VSV) infection. Interacts with ATG3. Interacts with ATG7 and ATG10. Interacts with FADD. Interacts with Bassoon/BSN; this interaction is important for the regulation of presynaptic autophagy. Interacts with ATG16L2. Post-translationally, conjugated to ATG12; which is essential for autophagy, but is not required for association with isolation membrane. In terms of processing, acetylated by EP300.

The protein resides in the cytoplasm. The protein localises to the preautophagosomal structure membrane. Involved in autophagic vesicle formation. Conjugation with ATG12, through a ubiquitin-like conjugating system involving ATG7 as an E1-like activating enzyme and ATG10 as an E2-like conjugating enzyme, is essential for its function. The ATG12-ATG5 conjugate acts as an E3-like enzyme which is required for lipidation of ATG8 family proteins and their association to the vesicle membranes. Involved in mitochondrial quality control after oxidative damage, and in subsequent cellular longevity. Plays a critical role in multiple aspects of lymphocyte development and is essential for both B and T lymphocyte survival and proliferation. Required for optimal processing and presentation of antigens for MHC II. Involved in the maintenance of axon morphology and membrane structures, as well as in normal adipocyte differentiation. Promotes primary ciliogenesis through removal of OFD1 from centriolar satellites and degradation of IFT20 via the autophagic pathway. As part of the ATG8 conjugation system with ATG12 and ATG16L1, required for recruitment of LRRK2 to stressed lysosomes and induction of LRRK2 kinase activity in response to lysosomal stress. In terms of biological role, may play an important role in the apoptotic process, possibly within the modified cytoskeleton. Its expression is a relatively late event in the apoptotic process, occurring downstream of caspase activity. Plays a crucial role in IFN-gamma-induced autophagic cell death by interacting with FADD. The polypeptide is Autophagy protein 5 (Sus scrofa (Pig)).